A 186-amino-acid chain; its full sequence is HGPRTase-like protein 3 (186 aa).

This sequence belongs to the purine/pyrimidine phosphoribosyltransferase family. Archaeal HPRT subfamily.

Functionally, may catalyze a purine salvage reaction, the substrate is unknown. The chain is HGPRTase-like protein 3 from Haloterrigena turkmenica (strain ATCC 51198 / DSM 5511 / JCM 9101 / NCIMB 13204 / VKM B-1734 / 4k) (Halococcus turkmenicus).